The sequence spans 702 residues: Dynein axonemal intermediate chain 1 (702 aa).

Positions 1–58 (MLPASSKMPHKQPPPPRKQSISMGRGARKRDEDSGTEVGEGTDEWVQSKATVKPPDQL) are disordered. Serine 134 and serine 137 each carry phosphoserine. WD repeat units follow at residues 383 to 423 (SSES…SQPS), 432 to 475 (KHTD…LVHT), 540 to 580 (AHNM…PMFI), 582 to 622 (DLNS…YEAI), and 630 to 669 (KKKN…RKMP).

This sequence belongs to the dynein intermediate chain family. In terms of assembly, consists of at least two heavy chains and a number of intermediate and light chains. Interacts with BICD2. Interacts with CFAP45 and CFAP52. Interacts with CFAP53.

The protein localises to the cytoplasm. It is found in the cytoskeleton. Its subcellular location is the cilium axoneme. Part of the dynein complex of respiratory cilia. This is Dynein axonemal intermediate chain 1 (DNAI1) from Bos taurus (Bovine).